Here is a 488-residue protein sequence, read N- to C-terminus: Phenylalanine--tRNA ligase alpha subunit (488 aa).

L-phenylalanine-binding positions include T315, 354–356, F394, and F419; that span reads QLD.

It belongs to the class-II aminoacyl-tRNA synthetase family. Phe-tRNA synthetase alpha subunit type 2 subfamily. Tetramer of two alpha and two beta subunits. The cofactor is Mg(2+).

It localises to the cytoplasm. It carries out the reaction tRNA(Phe) + L-phenylalanine + ATP = L-phenylalanyl-tRNA(Phe) + AMP + diphosphate + H(+). The polypeptide is Phenylalanine--tRNA ligase alpha subunit (Pyrobaculum calidifontis (strain DSM 21063 / JCM 11548 / VA1)).